The primary structure comprises 354 residues: Protein C42 (354 aa).

The Nuclear localization signal motif lies at K349–K352.

The protein belongs to the baculoviridae C42 protein family.

It is found in the host nucleus. In Orgyia pseudotsugata (Douglas-fir tussock moth), this protein is Protein C42.